Reading from the N-terminus, the 201-residue chain is Histone-like protein HC2 (201 aa).

The tract at residues 1–69 (MLGVQKKCST…VAKKATAKKA (69 aa)) is disordered. 2 stretches are compositionally biased toward basic residues: residues 8-50 (CSTR…KTVA) and 59-69 (PVAKKATAKKA).

The protein belongs to the histone H1/H5 family. HCT subfamily.

Might have a role in establishing the nucleoid structure of elementary bodies. This chain is Histone-like protein HC2 (hctB), found in Chlamydia trachomatis serovar D (strain ATCC VR-885 / DSM 19411 / UW-3/Cx).